Here is a 279-residue protein sequence, read N- to C-terminus: 4-diphosphocytidyl-2-C-methyl-D-erythritol kinase (279 aa).

The active site involves Lys9. Residue 93–103 (PMGAGLGGGSS) coordinates ATP. The active site involves Asp135.

The protein belongs to the GHMP kinase family. IspE subfamily.

The catalysed reaction is 4-CDP-2-C-methyl-D-erythritol + ATP = 4-CDP-2-C-methyl-D-erythritol 2-phosphate + ADP + H(+). It participates in isoprenoid biosynthesis; isopentenyl diphosphate biosynthesis via DXP pathway; isopentenyl diphosphate from 1-deoxy-D-xylulose 5-phosphate: step 3/6. Catalyzes the phosphorylation of the position 2 hydroxy group of 4-diphosphocytidyl-2C-methyl-D-erythritol. The sequence is that of 4-diphosphocytidyl-2-C-methyl-D-erythritol kinase from Acinetobacter baylyi (strain ATCC 33305 / BD413 / ADP1).